Reading from the N-terminus, the 138-residue chain is Protein FAM136A (138 aa).

This sequence belongs to the FAM136 family.

The polypeptide is Protein FAM136A (fam136a) (Xenopus laevis (African clawed frog)).